Here is a 326-residue protein sequence, read N- to C-terminus: MEKNRRKKDDAGVMTKTLAGVAALTFLVSFICSSYDITFSHVISTIDVILEESEYYRSTKEWMASSIDATWHEVSIPSRKAEHLQAINPEVDVAAGGKHVFTPEQLHFFDGSRDSKPCYLAILGRVYDVDGKKEYYGPGKSYHHFAGRDATRAFTTGDFTENGLVASTHGLSHDELLSIRDWVSFYDKEYPLVGVVADLYYDSDGQPTAELTDVLARVEKANEYRKAQAVEIEVFPPCNSEYNQNGGRVWCSTKSGGVERQWAGVPRKLIEQTTKKFRCACVKNFGPGVSGAEEVKTSSNRGDLDHPDLELFPDCSPTSNSCKIVS.

Positions M1–S34 are cleaved as a signal peptide. A Cytochrome b5 heme-binding domain is found at K98–A197.

The protein belongs to the cytochrome b5 family. MAPR subfamily.

The protein resides in the secreted. Functionally, heme-binding protein. The chain is Neuferricin homolog from Caenorhabditis briggsae.